Consider the following 294-residue polypeptide: Zinc finger protein CONSTANS-LIKE 3 (294 aa).

Residues C8, C11, C31, H36, C51, C54, C74, and H79 each contribute to the Zn(2+) site. The segment at 8–50 adopts a B box-type 1; atypical zinc-finger fold; sequence CDSCKSTAATLFCRADAAFLCGDCDGKIHTANKLASRHERVWL. The B box-type 2; atypical zinc finger occupies 51–93; sequence CEVCEQAPAHVTCKADAAALCVTCDRDIHSANPLSRRHERVPI. The 43-residue stretch at 229 to 271 folds into the CCT domain; that stretch reads REARVLRYREKRKNRKFEKTIRYASRKAYAEMRPRIKGRFAKR.

Belongs to the CONSTANS family.

Its subcellular location is the nucleus. The sequence is that of Zinc finger protein CONSTANS-LIKE 3 (COL3) from Arabidopsis thaliana (Mouse-ear cress).